The primary structure comprises 283 residues: Pantothenate synthetase (283 aa).

Position 30 to 37 (30 to 37) interacts with ATP; the sequence is MGNLHAGH. The active-site Proton donor is His-37. Gln-61 is a (R)-pantoate binding site. Beta-alanine is bound at residue Gln-61. Position 149-152 (149-152) interacts with ATP; the sequence is GRKD. A (R)-pantoate-binding site is contributed by Gln-155. 186–189 is a binding site for ATP; the sequence is LSSR.

The protein belongs to the pantothenate synthetase family. In terms of assembly, homodimer.

It is found in the cytoplasm. It catalyses the reaction (R)-pantoate + beta-alanine + ATP = (R)-pantothenate + AMP + diphosphate + H(+). Its pathway is cofactor biosynthesis; (R)-pantothenate biosynthesis; (R)-pantothenate from (R)-pantoate and beta-alanine: step 1/1. Functionally, catalyzes the condensation of pantoate with beta-alanine in an ATP-dependent reaction via a pantoyl-adenylate intermediate. In Chromohalobacter salexigens (strain ATCC BAA-138 / DSM 3043 / CIP 106854 / NCIMB 13768 / 1H11), this protein is Pantothenate synthetase.